The following is a 227-amino-acid chain: Cytochrome c oxidase subunit 2 (227 aa).

Over 1–14 (MAYPFQLGLQDATS) the chain is Mitochondrial intermembrane. Residues 15–45 (PIMEELTNFHDHTLMIVFLISSLVLYIISLM) form a helical membrane-spanning segment. Over 46–59 (LTTKLTHTSTMDAQ) the chain is Mitochondrial matrix. Residues 60-87 (EVETIWTILPAVILILIALPSLRILYMM) traverse the membrane as a helical segment. The Mitochondrial intermembrane segment spans residues 88–227 (DEINNPVLTV…YFENWSASMI (140 aa)). 6 residues coordinate Cu cation: H161, C196, E198, C200, H204, and M207. Residue E198 coordinates Mg(2+). Y218 carries the post-translational modification Phosphotyrosine.

The protein belongs to the cytochrome c oxidase subunit 2 family. In terms of assembly, component of the cytochrome c oxidase (complex IV, CIV), a multisubunit enzyme composed of 14 subunits. The complex is composed of a catalytic core of 3 subunits MT-CO1, MT-CO2 and MT-CO3, encoded in the mitochondrial DNA, and 11 supernumerary subunits COX4I, COX5A, COX5B, COX6A, COX6B, COX6C, COX7A, COX7B, COX7C, COX8 and NDUFA4, which are encoded in the nuclear genome. The complex exists as a monomer or a dimer and forms supercomplexes (SCs) in the inner mitochondrial membrane with NADH-ubiquinone oxidoreductase (complex I, CI) and ubiquinol-cytochrome c oxidoreductase (cytochrome b-c1 complex, complex III, CIII), resulting in different assemblies (supercomplex SCI(1)III(2)IV(1) and megacomplex MCI(2)III(2)IV(2)). Found in a complex with TMEM177, COA6, COX18, COX20, SCO1 and SCO2. Interacts with TMEM177 in a COX20-dependent manner. Interacts with COX20. Interacts with COX16. The cofactor is Cu cation.

It is found in the mitochondrion inner membrane. It carries out the reaction 4 Fe(II)-[cytochrome c] + O2 + 8 H(+)(in) = 4 Fe(III)-[cytochrome c] + 2 H2O + 4 H(+)(out). Component of the cytochrome c oxidase, the last enzyme in the mitochondrial electron transport chain which drives oxidative phosphorylation. The respiratory chain contains 3 multisubunit complexes succinate dehydrogenase (complex II, CII), ubiquinol-cytochrome c oxidoreductase (cytochrome b-c1 complex, complex III, CIII) and cytochrome c oxidase (complex IV, CIV), that cooperate to transfer electrons derived from NADH and succinate to molecular oxygen, creating an electrochemical gradient over the inner membrane that drives transmembrane transport and the ATP synthase. Cytochrome c oxidase is the component of the respiratory chain that catalyzes the reduction of oxygen to water. Electrons originating from reduced cytochrome c in the intermembrane space (IMS) are transferred via the dinuclear copper A center (CU(A)) of subunit 2 and heme A of subunit 1 to the active site in subunit 1, a binuclear center (BNC) formed by heme A3 and copper B (CU(B)). The BNC reduces molecular oxygen to 2 water molecules using 4 electrons from cytochrome c in the IMS and 4 protons from the mitochondrial matrix. The protein is Cytochrome c oxidase subunit 2 of Rattus norvegicus (Rat).